We begin with the raw amino-acid sequence, 311 residues long: JNK1/MAPK8-associated membrane protein (311 aa).

Topologically, residues 1–57 are lumenal; the sequence is MAVDIQPACLGLYCGKTLLFKNGSTEIYGECGVCPRGQRTNAQKYCQPCTESPELYD. Asn-22 carries an N-linked (GlcNAc...) asparagine glycan. The helical transmembrane segment at 58–78 threads the bilayer; sequence WLYLGFMAMLPLVLHWFFIEW. Residues 79-87 lie on the Cytoplasmic side of the membrane; it reads YSGKKSSSA. Residues 88–108 traverse the membrane as a helical segment; the sequence is LFQHITALFECSMAAIITLLV. At 109-149 the chain is on the lumenal side; that stretch reads SDPVGVLYIRSCRVLMLSDWYTMLYNPSPDYVTTVHCTHEA. Residues 150–170 traverse the membrane as a helical segment; that stretch reads VYPLYTIVFIYYAFCLVLMML. Residues 171-188 are Cytoplasmic-facing; it reads LRPLLVKKIACGLGKSDR. A helical membrane pass occupies residues 189–209; that stretch reads FKSIYAALYFFPILTVLQAVG. A topological domain (lumenal) is located at residue Gly-210. A helical membrane pass occupies residues 211-231; it reads GLLYYAFPYIILVLSLVTLAV. Topologically, residues 232-250 are cytoplasmic; it reads YMSASEIENCYDLLVRKKR. Residues 251-271 traverse the membrane as a helical segment; the sequence is LIVLFSHWLLHAYGIISISRV. The Lumenal segment spans residues 272-277; sequence DKLEQD. A helical transmembrane segment spans residues 278–298; that stretch reads LPLLALVPTPALFYLFTAKFT. Residues 299–311 are Cytoplasmic-facing; sequence EPSRILSEGANGH.

Interacts with RNF5 and MAPK8, but not with MAPK9. Binding to MAPK8 occurs before and after exposure to stress, such as UV irradiation. After exposure to stress, interacts with phosphorylated MAPK8. Competes with DUSP10 for MAPK8 binding. Associates with multiple components of the proteasome and with ERAD regulatory proteins including AMFR/GP78, CANX, PSMC1, PSMC2, PSMC3/TBP1, PSMC5, PSMC6, PSMD8, SEC61-ALPHA and UFD1. Interacts with DERL1 (in the presence of misfolded protein CFTR(F508del)). Post-translationally, ubiquitinated by RNF5 via 'Lys-63'-linked ubiquitin linkage in a UBE2N-dependent manner. Ubiquitination decreases association with components of the proteasome and ERAD.

It is found in the endoplasmic reticulum membrane. Regulates the duration of MAPK8 activity in response to various stress stimuli. Facilitates degradation of misfolded endoplasmic reticulum (ER) proteins through the recruitment of components of the proteasome and endoplasmic reticulum-associated degradation (ERAD) system. In Homo sapiens (Human), this protein is JNK1/MAPK8-associated membrane protein (JKAMP).